The chain runs to 382 residues: Elongation factor Tu (382 aa).

GTP-binding positions include 1 to 7 (HVDHGKT), 62 to 66 (DCPGH), and 117 to 120 (NKVD). A tr-type G domain is found at 1–190 (HVDHGKTTLT…AVDEYIPTPQ (190 aa)). Thr7 is a binding site for Mg(2+).

The protein belongs to the TRAFAC class translation factor GTPase superfamily. Classic translation factor GTPase family. EF-Tu/EF-1A subfamily. In terms of assembly, monomer.

The protein resides in the cytoplasm. The enzyme catalyses GTP + H2O = GDP + phosphate + H(+). GTP hydrolase that promotes the GTP-dependent binding of aminoacyl-tRNA to the A-site of ribosomes during protein biosynthesis. This is Elongation factor Tu from Chloroflexus aurantiacus.